The sequence spans 348 residues: Probable dual-specificity RNA methyltransferase RlmN (348 aa).

Catalysis depends on E90, which acts as the Proton acceptor. In terms of domain architecture, Radical SAM core spans 96–324 (AAERLTVCVS…ASVRHTRGLE (229 aa)). The cysteines at positions 103 and 329 are disulfide-linked. Positions 110, 114, and 117 each coordinate [4Fe-4S] cluster. Residues 157–158 (GE), S187, 210–212 (SLH), and N286 each bind S-adenosyl-L-methionine. Residue C329 is the S-methylcysteine intermediate of the active site.

It belongs to the radical SAM superfamily. RlmN family. Requires [4Fe-4S] cluster as cofactor.

It localises to the cytoplasm. It catalyses the reaction adenosine(2503) in 23S rRNA + 2 reduced [2Fe-2S]-[ferredoxin] + 2 S-adenosyl-L-methionine = 2-methyladenosine(2503) in 23S rRNA + 5'-deoxyadenosine + L-methionine + 2 oxidized [2Fe-2S]-[ferredoxin] + S-adenosyl-L-homocysteine. It carries out the reaction adenosine(37) in tRNA + 2 reduced [2Fe-2S]-[ferredoxin] + 2 S-adenosyl-L-methionine = 2-methyladenosine(37) in tRNA + 5'-deoxyadenosine + L-methionine + 2 oxidized [2Fe-2S]-[ferredoxin] + S-adenosyl-L-homocysteine. Specifically methylates position 2 of adenine 2503 in 23S rRNA and position 2 of adenine 37 in tRNAs. This Gloeobacter violaceus (strain ATCC 29082 / PCC 7421) protein is Probable dual-specificity RNA methyltransferase RlmN.